A 192-amino-acid polypeptide reads, in one-letter code: MAP6 domain-containing protein 1 (192 aa).

3 S-palmitoyl cysteine lipidation sites follow: Cys5, Cys10, and Cys11. Residues 36 to 106 (LESEEPIPGG…RTKPSATPGR (71 aa)) form a disordered region. Ser38 is subject to Phosphoserine. Low complexity predominate over residues 43–58 (PGGVPSRRGPSPAGSR). 2 mn regions span residues 123–136 (TTSYRQEFQAWTGV) and 158–170 (DGSPRAGFQAPEV). Ser160 carries the phosphoserine modification.

Belongs to the STOP family. In terms of assembly, interacts with calmodulin. Post-translationally, palmitoylated. Palmitoylation enhances association with microtubules.

The protein localises to the golgi apparatus. It is found in the cytoplasm. The protein resides in the cytoskeleton. Its function is as follows. May have microtubule-stabilizing activity. The polypeptide is MAP6 domain-containing protein 1 (MAP6D1) (Bos taurus (Bovine)).